The following is a 235-amino-acid chain: Ribonuclease 3 (235 aa).

The region spanning 11-137 (RAWCAEALGY…VVGALYLDGG (127 aa)) is the RNase III domain. Residue Glu51 participates in Mg(2+) binding. Asp55 is an active-site residue. 2 residues coordinate Mg(2+): Asp123 and Glu126. Glu126 is a catalytic residue. The DRBM domain maps to 164–233 (DYKTQLQEQL…ARQALMPEHH (70 aa)).

It belongs to the ribonuclease III family. Homodimer. Mg(2+) is required as a cofactor.

Its subcellular location is the cytoplasm. It catalyses the reaction Endonucleolytic cleavage to 5'-phosphomonoester.. In terms of biological role, digests double-stranded RNA. Involved in the processing of primary rRNA transcript to yield the immediate precursors to the large and small rRNAs (23S and 16S). Processes some mRNAs, and tRNAs when they are encoded in the rRNA operon. Processes pre-crRNA and tracrRNA of type II CRISPR loci if present in the organism. The polypeptide is Ribonuclease 3 (Symbiobacterium thermophilum (strain DSM 24528 / JCM 14929 / IAM 14863 / T)).